A 730-amino-acid chain; its full sequence is Protein groucho (730 aa).

The segment at 144–411 is disordered; the sequence is QVPGGPPQPM…GKPAYSFHMN (268 aa). Basic and acidic residues predominate over residues 198–233; sequence AEERLRNSVSPADREKYRTRSPLDIENDSKRRKDEK. 3 positions are modified to phosphoserine: serine 205, serine 207, and serine 218. The CCN domain stretch occupies residues 206 to 267; sequence VSPADREKYR…SPRPNGEHVS (62 aa). Residues 227–230 carry the Nuclear localization signal motif; it reads KRRK. Residue serine 242 is modified to Phosphoserine; by CK2. Over residues 254–283 the composition is skewed to basic and acidic residues; it reads MESHSPRPNGEHVSMEVRDRESLNGERLEK. At serine 258 the chain carries Phosphoserine; by CDC2. Residues 262–425 are binding to basic helix-loop-helix domain; that stretch reads NGEHVSMEVR…LQPVPFPPDA (164 aa). Serine 267 carries the post-translational modification Phosphoserine. Composition is skewed to low complexity over residues 296–308, 322–345, and 353–362; these read SRSGSSSSRSTPS, AKARTPTPNAAAPAPGVNPKQMMP, and YPGAPYQRPA. Residues threonine 326 and threonine 328 each carry the phosphothreonine modification. Pro residues predominate over residues 366 to 382; the sequence is QRPPSDPAYGRPPPMPY. 7 WD repeats span residues 442 to 480, 488 to 527, 532 to 571, 574 to 613, 615 to 654, 656 to 695, and 697 to 730; these read SHGEVVCAVTISNPTKYVYTGGKGCVKVWDISQPGNKNP, QRDNYIRSVKLLPDGRTLIVGGEASNLSIWDLASPTPRIK, SAAPACYALAISPDSKVCFSCCSDGNIAVWDLHNEILVRQ, GHTDGASCIDISPDGSRLWTGGLDNTVRSWDLREGRQLQQ, DFSSQIFSLGYCPTGDWLAVGMENSHVEVLHASKPDKYQL, LHESCVLSLRFAACGKWFVSTGKDNLLNAWRTPYGASIFQ, and KETSSVLSCDISTDDKYIVTGSGDKKATVYEVIY.

This sequence belongs to the WD repeat Groucho/TLE family. As to quaternary structure, forms a complex with the hairy/Enhancer of split/deadpan family of basic helix-loop-helix proteins in order to repress transcription. Its activity in regulating transcription depends on other proteins as it lacks a DNA-binding motif. Interacts with hairy/hry (via WRPW motif). Ubiquitinated by XIAP/BIRC4. Ubiquitinated by hyd in response to Wnt signaling, leading to degradation by the proteasome.

Its subcellular location is the nucleus. Transcriptional corepressor that regulates transcription when recruited to specific target DNA by hairy-related bHLH proteins. Maternally required for neurogenesis; in the segregation of the neuroectoderm. Directly or indirectly interacts with Notch and Delta. The polypeptide is Protein groucho (gro) (Drosophila melanogaster (Fruit fly)).